The following is a 468-amino-acid chain: Soluble pyridine nucleotide transhydrogenase (468 aa).

38–47 (ERHYNVGGGC) is a binding site for FAD.

The protein belongs to the class-I pyridine nucleotide-disulfide oxidoreductase family. Requires FAD as cofactor.

The protein resides in the cytoplasm. The enzyme catalyses NAD(+) + NADPH = NADH + NADP(+). Its function is as follows. Conversion of NADPH, generated by peripheral catabolic pathways, to NADH, which can enter the respiratory chain for energy generation. The polypeptide is Soluble pyridine nucleotide transhydrogenase (Pectobacterium atrosepticum (strain SCRI 1043 / ATCC BAA-672) (Erwinia carotovora subsp. atroseptica)).